The sequence spans 305 residues: RNA-binding protein with serine-rich domain 1 (305 aa).

Residues 1 to 10 (MDLSGVKKKS) are compositionally biased toward basic residues. A necessary for interaction with SRP54, nuclear localization and exon-skipping region spans residues 1 to 161 (MDLSGVKKKS…KRRSPSPKPT (161 aa)). Positions 1–170 (MDLSGVKKKS…TKVHIGRLTR (170 aa)) are disordered. Residues 1 to 220 (MDLSGVKKKS…ENPDEAEKAL (220 aa)) are necessary for interaction with the cleaved p110 isoform of CDC2L1. Glycyl lysine isopeptide (Lys-Gly) (interchain with G-Cter in SUMO2) cross-links involve residues lysine 7 and lysine 15. Residues 33–59 (DRSDEKSKDRSKDKGATKESSEKDRGR) are compositionally biased toward basic and acidic residues. Serine 53 bears the Phosphoserine mark. The span at 68–126 (ASSGSSSTRSRSSSTSSSGSSTSTGSSSGSSSSSASSRSGSSSTSRSSSSSSSSGSPSP) shows a compositional bias: low complexity. Residues 69-121 (SSGSSSTRSRSSSTSSSGSSTSTGSSSGSSSSSASSRSGSSSTSRSSSSSSSS) are necessary for interactions with UPF2 and UPF3B and UPF2-dependent NMD. Basic residues-rich tracts occupy residues 127 to 143 (SRRR…KSKP) and 151 to 167 (RKRR…HIGR). Phosphoserine is present on residues serine 155 and serine 157. The necessary for interaction with PNN and exon-skipping stretch occupies residues 156-242 (PSPKPTKVHI…ITATAVLAPW (87 aa)). The tract at residues 159-244 (KPTKVHIGRL…ATAVLAPWPR (86 aa)) is interaction with SAP18 and ACIN1. Threonine 161 is subject to Phosphothreonine. Residues 161–240 (TKVHIGRLTR…QEITATAVLA (80 aa)) form the RRM domain. Lysine 218 is modified (N6-acetyllysine). Residues 238–305 (VLAPWPRPPP…RSRSSSNSSR (68 aa)) form a necessary for interaction with TRA2B, nuclear localization and exon-skipping region. The disordered stretch occupies residues 240 to 305 (APWPRPPPRR…RSRSSSNSSR (66 aa)). The span at 242 to 261 (WPRPPPRRFSPPRRMLPPLP) shows a compositional bias: pro residues. A compositionally biased stretch (basic residues) spans 266 to 298 (SPPRMRRRSRSPRRRSPARRRSRSPGRRRHRSR).

It belongs to the splicing factor SR family. As to quaternary structure, found in mRNA splicing-dependent exon junction complexes (EJC). Found in a post-splicing complex with NXF1, RBM8A, UPF1, UPF2, UPF3A, UPF3B and RNPS1. Component of the heterotrimeric ASAP (apoptosis- and splicing-associated protein) and PSAP complexes consisting of RNPS1, SAP18 and either ACIN1 or PNN, respectively; the ASAP and PSAP complexes probably are formed mutually exclusive. Component of the active spliceosome. Associates with polysomes. Interacts with the cleaved p110 isoform of CDC2L1, CSNK2A1, PNN, SART3, SRP54, SRRM1 and TRA2B/SFRS10. Post-translationally, phosphorylated on one or more of the four Ser/Thr residues (Ser-43, Thr-49, Ser-52 or Ser-53). Ser-53 phosphorylation site is important for splicing and translation stimulation activity in vitro.

It is found in the nucleus. The protein resides in the nucleus speckle. Its subcellular location is the cytoplasm. Part of pre- and post-splicing multiprotein mRNP complexes. Auxiliary component of the splicing-dependent multiprotein exon junction complex (EJC) deposited at splice junction on mRNAs. The EJC is a dynamic structure consisting of core proteins and several peripheral nuclear and cytoplasmic associated factors that join the complex only transiently either during EJC assembly or during subsequent mRNA metabolism. Component of the ASAP and PSAP complexes which bind RNA in a sequence-independent manner and are proposed to be recruited to the EJC prior to or during the splicing process and to regulate specific excision of introns in specific transcription subsets. The ASAP complex can inhibit RNA processing during in vitro splicing reactions. The ASAP complex promotes apoptosis and is disassembled after induction of apoptosis. Enhances the formation of the ATP-dependent A complex of the spliceosome. Involved in both constitutive splicing and, in association with SRP54 and TRA2B/SFRS10, in distinctive modulation of alternative splicing in a substrate-dependent manner. Involved in the splicing modulation of BCL2L1/Bcl-X (and probably other apoptotic genes); specifically inhibits formation of proapoptotic isoforms such as Bcl-X(S); the activity is different from the established EJC assembly and function. Participates in mRNA 3'-end cleavage. Involved in UPF2-dependent nonsense-mediated decay (NMD) of mRNAs containing premature stop codons. Also mediates increase of mRNA abundance and translational efficiency. Binds spliced mRNA 20-25 nt upstream of exon-exon junctions. The chain is RNA-binding protein with serine-rich domain 1 (RNPS1) from Bos taurus (Bovine).